Consider the following 230-residue polypeptide: 2-C-methyl-D-erythritol 4-phosphate cytidylyltransferase (230 aa).

Belongs to the IspD/TarI cytidylyltransferase family. IspD subfamily.

The enzyme catalyses 2-C-methyl-D-erythritol 4-phosphate + CTP + H(+) = 4-CDP-2-C-methyl-D-erythritol + diphosphate. It functions in the pathway isoprenoid biosynthesis; isopentenyl diphosphate biosynthesis via DXP pathway; isopentenyl diphosphate from 1-deoxy-D-xylulose 5-phosphate: step 2/6. Its function is as follows. Catalyzes the formation of 4-diphosphocytidyl-2-C-methyl-D-erythritol from CTP and 2-C-methyl-D-erythritol 4-phosphate (MEP). In Laribacter hongkongensis (strain HLHK9), this protein is 2-C-methyl-D-erythritol 4-phosphate cytidylyltransferase.